A 150-amino-acid polypeptide reads, in one-letter code: Protein E6 (150 aa).

Zinc fingers lie at residues 31-67 and 104-140; these read CVFCRKTLSTAEVYAFQYKDLNIVWQGNFPFAACACC and CYLCHKPLCDVEKLRHILEKARFIKLNCEWKGRCFHC.

The protein belongs to the papillomaviridae E6 protein family. In terms of assembly, forms homodimers. Interacts with ubiquitin-protein ligase UBE3A/E6-AP; this interaction stimulates UBE3A ubiquitin activity. Interacts with host TP53 and EP300; this interaction inhibits TP53 activity.

Its subcellular location is the host cytoplasm. The protein resides in the host nucleus. In terms of biological role, plays a major role in the induction and maintenance of cellular transformation. E6 associates with host UBE3A/E6-AP ubiquitin-protein ligase and modulates its activity. Sequesters tumor suppressor TP53 in the host cytoplasm and modulates its activity by interacting with host EP300 that results in the reduction of TP53 acetylation and activation. In turn, apoptosis induced by DNA damage is inhibited. E6 also protects host keratinocytes from apoptosis by mediating the degradation of host BAK1. May also inhibit host immune response. The chain is Protein E6 from Pygmy chimpanzee papillomavirus type 1 (PCPV-1).